The primary structure comprises 210 residues: Uracil phosphoribosyltransferase (210 aa).

Residues Arg78, Arg103, and 130–138 (DPMLATGGS) contribute to the 5-phospho-alpha-D-ribose 1-diphosphate site. Residues Ile193 and 198 to 200 (GDA) contribute to the uracil site. Asp199 contributes to the 5-phospho-alpha-D-ribose 1-diphosphate binding site.

Belongs to the UPRTase family. The cofactor is Mg(2+).

It catalyses the reaction UMP + diphosphate = 5-phospho-alpha-D-ribose 1-diphosphate + uracil. It participates in pyrimidine metabolism; UMP biosynthesis via salvage pathway; UMP from uracil: step 1/1. Its activity is regulated as follows. Allosterically activated by GTP. Catalyzes the conversion of uracil and 5-phospho-alpha-D-ribose 1-diphosphate (PRPP) to UMP and diphosphate. The polypeptide is Uracil phosphoribosyltransferase (Laribacter hongkongensis (strain HLHK9)).